Reading from the N-terminus, the 196-residue chain is Putative NADH dehydrogenase/NAD(P)H nitroreductase Pnuc_0932 (196 aa).

It belongs to the nitroreductase family. HadB/RutE subfamily. It depends on FMN as a cofactor.

This Polynucleobacter asymbioticus (strain DSM 18221 / CIP 109841 / QLW-P1DMWA-1) (Polynucleobacter necessarius subsp. asymbioticus) protein is Putative NADH dehydrogenase/NAD(P)H nitroreductase Pnuc_0932.